A 351-amino-acid polypeptide reads, in one-letter code: Deoxyguanosinetriphosphate triphosphohydrolase-like protein (351 aa).

An HD domain is found at 75–196 (RLTHTLEVAE…VRVADIIAYL (122 aa)).

Belongs to the dGTPase family. Type 2 subfamily.

The polypeptide is Deoxyguanosinetriphosphate triphosphohydrolase-like protein (Desulfatibacillum aliphaticivorans).